A 447-amino-acid polypeptide reads, in one-letter code: GTPase Der (447 aa).

EngA-type G domains lie at 3–167 and 181–354; these read PVVA…NLPD and IKLA…KSAT. GTP is bound by residues 9–16, 56–60, 119–122, 187–194, 234–238, and 299–302; these read GRPNVGKS, DTGGF, NKAE, DTAGL, and NKWD. The region spanning 355–439 is the KH-like domain; that stretch reads RKMSTPVLTR…PLRIQFKSSQ (85 aa).

This sequence belongs to the TRAFAC class TrmE-Era-EngA-EngB-Septin-like GTPase superfamily. EngA (Der) GTPase family. Associates with the 50S ribosomal subunit.

Its function is as follows. GTPase that plays an essential role in the late steps of ribosome biogenesis. The chain is GTPase Der from Variovorax paradoxus (strain S110).